The sequence spans 543 residues: Splicing factor U2af large subunit B (543 aa).

The segment covering 1 to 10 (MADDNGGGGD) has biased composition (gly residues). Residues 1-171 (MADDNGGGGD…IPTPSQLPGS (171 aa)) are disordered. Composition is skewed to basic and acidic residues over residues 17–78 (VRPE…DRDR) and 88–114 (EHRD…ERDG). Positions 115–126 (HRRHRSRSRSRS) are enriched in basic residues. RRM domains lie at 207–290 (RRVY…RPTD), 327–405 (DRIF…RANQ), and 446–532 (QVVT…YPEN).

It belongs to the splicing factor SR family.

The protein localises to the nucleus. Its function is as follows. Necessary for the splicing of pre-mRNA. The sequence is that of Splicing factor U2af large subunit B (U2AF65B) from Triticum aestivum (Wheat).